The sequence spans 475 residues: Ribulose bisphosphate carboxylase large chain (475 aa).

Residues 1–2 (MS) constitute a propeptide that is removed on maturation. Pro3 carries the N-acetylproline modification. An N6,N6,N6-trimethyllysine modification is found at Lys14. Residues Asn123 and Thr173 each contribute to the substrate site. Lys175 functions as the Proton acceptor in the catalytic mechanism. Lys177 provides a ligand contact to substrate. The Mg(2+) site is built by Lys201, Asp203, and Glu204. Lys201 is subject to N6-carboxylysine. The active-site Proton acceptor is the His294. Substrate is bound by residues Arg295, His327, and Ser379.

It belongs to the RuBisCO large chain family. Type I subfamily. In terms of assembly, heterohexadecamer of 8 large chains and 8 small chains; disulfide-linked. The disulfide link is formed within the large subunit homodimers. It depends on Mg(2+) as a cofactor. Post-translationally, the disulfide bond which can form in the large chain dimeric partners within the hexadecamer appears to be associated with oxidative stress and protein turnover.

Its subcellular location is the plastid. The protein localises to the chloroplast. It carries out the reaction 2 (2R)-3-phosphoglycerate + 2 H(+) = D-ribulose 1,5-bisphosphate + CO2 + H2O. The catalysed reaction is D-ribulose 1,5-bisphosphate + O2 = 2-phosphoglycolate + (2R)-3-phosphoglycerate + 2 H(+). Functionally, ruBisCO catalyzes two reactions: the carboxylation of D-ribulose 1,5-bisphosphate, the primary event in carbon dioxide fixation, as well as the oxidative fragmentation of the pentose substrate in the photorespiration process. Both reactions occur simultaneously and in competition at the same active site. The protein is Ribulose bisphosphate carboxylase large chain of Cerastium glomeratum (Sticky chickweed).